An 80-amino-acid chain; its full sequence is Defensin-like protein 46 (80 aa).

A signal peptide spans 1-27 (MGSTKTLVTCFLTIILAVSLSNHNVLA). 4 cysteine pairs are disulfide-bonded: Cys40–Cys78, Cys44–Cys65, Cys50–Cys76, and Cys54–Cys77.

Belongs to the DEFL family.

It localises to the secreted. The protein is Defensin-like protein 46 of Arabidopsis thaliana (Mouse-ear cress).